Here is a 480-residue protein sequence, read N- to C-terminus: Ribulose bisphosphate carboxylase large chain (480 aa).

A propeptide spanning residues Met1–Ser2 is cleaved from the precursor. At Pro3 the chain carries N-acetylproline. Lys14 carries the post-translational modification N6,N6,N6-trimethyllysine. The substrate site is built by Asn123 and Thr173. Residue Lys175 is the Proton acceptor of the active site. A substrate-binding site is contributed by Lys177. Mg(2+) contacts are provided by Lys201, Asp203, and Glu204. An N6-carboxylysine modification is found at Lys201. His294 serves as the catalytic Proton acceptor. 3 residues coordinate substrate: Arg295, His327, and Ser379.

This sequence belongs to the RuBisCO large chain family. Type I subfamily. Heterohexadecamer of 8 large chains and 8 small chains; disulfide-linked. The disulfide link is formed within the large subunit homodimers. Requires Mg(2+) as cofactor. The disulfide bond which can form in the large chain dimeric partners within the hexadecamer appears to be associated with oxidative stress and protein turnover.

Its subcellular location is the plastid. The protein resides in the chloroplast. It carries out the reaction 2 (2R)-3-phosphoglycerate + 2 H(+) = D-ribulose 1,5-bisphosphate + CO2 + H2O. The catalysed reaction is D-ribulose 1,5-bisphosphate + O2 = 2-phosphoglycolate + (2R)-3-phosphoglycerate + 2 H(+). RuBisCO catalyzes two reactions: the carboxylation of D-ribulose 1,5-bisphosphate, the primary event in carbon dioxide fixation, as well as the oxidative fragmentation of the pentose substrate in the photorespiration process. Both reactions occur simultaneously and in competition at the same active site. The chain is Ribulose bisphosphate carboxylase large chain from Basella alba (Malabar spinach).